The following is an 81-amino-acid chain: Defensin-like protein 311 (81 aa).

Residues M1 to G24 form the signal peptide. 3 disulfide bridges follow: C27–C50, C33–C57, and C41–C59.

It belongs to the DEFL family.

The protein localises to the secreted. This Arabidopsis thaliana (Mouse-ear cress) protein is Defensin-like protein 311.